A 115-amino-acid polypeptide reads, in one-letter code: NADH-ubiquinone oxidoreductase chain 3 (115 aa).

3 helical membrane passes run 4 to 24 (IVILFINATLSLGLITVAFWL), 55 to 75 (FFLIGITFLLFDLEITLLLPL), and 84 to 104 (TYFTMLVSFLLVSVLALGLMY).

The protein belongs to the complex I subunit 3 family. In terms of assembly, core subunit of respiratory chain NADH dehydrogenase (Complex I) which is composed of 45 different subunits. Interacts with TMEM186. Interacts with TMEM242.

It is found in the mitochondrion inner membrane. It catalyses the reaction a ubiquinone + NADH + 5 H(+)(in) = a ubiquinol + NAD(+) + 4 H(+)(out). Its function is as follows. Core subunit of the mitochondrial membrane respiratory chain NADH dehydrogenase (Complex I) which catalyzes electron transfer from NADH through the respiratory chain, using ubiquinone as an electron acceptor. Essential for the catalytic activity of complex I. The chain is NADH-ubiquinone oxidoreductase chain 3 from Eligmodontia typus (Highland gerbil mouse).